An 864-amino-acid chain; its full sequence is Translation initiation factor IF-2 (864 aa).

The span at 140 to 171 (DSRSLNTKKENKLKISNKDEQNKKFNQHRESN) shows a compositional bias: basic and acidic residues. The tract at residues 140-179 (DSRSLNTKKENKLKISNKDEQNKKFNQHRESNSFDLNHKK) is disordered. The tr-type G domain maps to 364 to 533 (IRAPVVTIMG…LLQAEMLELK (170 aa)). The interval 373–380 (GHVDHGKT) is G1. GTP is bound at residue 373–380 (GHVDHGKT). A G2 region spans residues 398-402 (GITQN). Residues 419-422 (DTPG) are G3. Residues 419-423 (DTPGH) and 473-476 (NKID) each bind GTP. The G4 stretch occupies residues 473–476 (NKID). A G5 region spans residues 509–511 (SAK).

Belongs to the TRAFAC class translation factor GTPase superfamily. Classic translation factor GTPase family. IF-2 subfamily.

Its subcellular location is the cytoplasm. Its function is as follows. One of the essential components for the initiation of protein synthesis. Protects formylmethionyl-tRNA from spontaneous hydrolysis and promotes its binding to the 30S ribosomal subunits. Also involved in the hydrolysis of GTP during the formation of the 70S ribosomal complex. The protein is Translation initiation factor IF-2 of Buchnera aphidicola subsp. Acyrthosiphon pisum (strain 5A).